The primary structure comprises 154 residues: 6,7-dimethyl-8-ribityllumazine synthase (154 aa).

5-amino-6-(D-ribitylamino)uracil is bound by residues F22, 56–58 (AFE), and 80–82 (AVI). 85–86 (ET) lines the (2S)-2-hydroxy-3-oxobutyl phosphate pocket. Residue H88 is the Proton donor of the active site. F113 contributes to the 5-amino-6-(D-ribitylamino)uracil binding site. R127 is a binding site for (2S)-2-hydroxy-3-oxobutyl phosphate.

Belongs to the DMRL synthase family.

It catalyses the reaction (2S)-2-hydroxy-3-oxobutyl phosphate + 5-amino-6-(D-ribitylamino)uracil = 6,7-dimethyl-8-(1-D-ribityl)lumazine + phosphate + 2 H2O + H(+). It participates in cofactor biosynthesis; riboflavin biosynthesis; riboflavin from 2-hydroxy-3-oxobutyl phosphate and 5-amino-6-(D-ribitylamino)uracil: step 1/2. Functionally, catalyzes the formation of 6,7-dimethyl-8-ribityllumazine by condensation of 5-amino-6-(D-ribitylamino)uracil with 3,4-dihydroxy-2-butanone 4-phosphate. This is the penultimate step in the biosynthesis of riboflavin. The chain is 6,7-dimethyl-8-ribityllumazine synthase from Thermoanaerobacter pseudethanolicus (strain ATCC 33223 / 39E) (Clostridium thermohydrosulfuricum).